An 81-amino-acid polypeptide reads, in one-letter code: Sulfur carrier protein TusA (81 aa).

Cys-19 functions as the Cysteine persulfide intermediate in the catalytic mechanism.

This sequence belongs to the sulfur carrier protein TusA family. Interacts with IscS.

It is found in the cytoplasm. It functions in the pathway tRNA modification. Sulfur carrier protein involved in sulfur trafficking in the cell. Part of a sulfur-relay system required for 2-thiolation during synthesis of 2-thiouridine of the modified wobble base 5-methylaminomethyl-2-thiouridine (mnm(5)s(2)U) in tRNA. Interacts with IscS and stimulates its cysteine desulfurase activity. Accepts an activated sulfur from IscS, which is then transferred to TusD, and thus determines the direction of sulfur flow from IscS to 2-thiouridine formation. Also appears to be involved in sulfur transfer for the biosynthesis of molybdopterin. This is Sulfur carrier protein TusA from Shigella boydii serotype 18 (strain CDC 3083-94 / BS512).